A 417-amino-acid chain; its full sequence is Glutamyl-tRNA reductase (417 aa).

Residues 49 to 52 (TCNR), Ser105, 110 to 112 (EPQ), and Gln116 each bind substrate. Cys50 serves as the catalytic Nucleophile. 185–190 (GAGEMI) serves as a coordination point for NADP(+).

It belongs to the glutamyl-tRNA reductase family. Homodimer.

It carries out the reaction (S)-4-amino-5-oxopentanoate + tRNA(Glu) + NADP(+) = L-glutamyl-tRNA(Glu) + NADPH + H(+). It participates in porphyrin-containing compound metabolism; protoporphyrin-IX biosynthesis; 5-aminolevulinate from L-glutamyl-tRNA(Glu): step 1/2. Its function is as follows. Catalyzes the NADPH-dependent reduction of glutamyl-tRNA(Glu) to glutamate 1-semialdehyde (GSA). This chain is Glutamyl-tRNA reductase, found in Azoarcus sp. (strain BH72).